The primary structure comprises 500 residues: Glycerol kinase (500 aa).

Residue T13 participates in ADP binding. ATP is bound by residues T13, T14, and S15. T13 contributes to the sn-glycerol 3-phosphate binding site. R17 contacts ADP. Sn-glycerol 3-phosphate contacts are provided by R83, E84, Y135, and D244. Glycerol-binding residues include R83, E84, Y135, D244, and Q245. Residues T266 and G309 each coordinate ADP. Residues T266, G309, Q313, and G410 each contribute to the ATP site. Residues G410 and N414 each contribute to the ADP site.

Belongs to the FGGY kinase family.

The enzyme catalyses glycerol + ATP = sn-glycerol 3-phosphate + ADP + H(+). Its pathway is polyol metabolism; glycerol degradation via glycerol kinase pathway; sn-glycerol 3-phosphate from glycerol: step 1/1. Its activity is regulated as follows. Inhibited by fructose 1,6-bisphosphate (FBP). Functionally, key enzyme in the regulation of glycerol uptake and metabolism. Catalyzes the phosphorylation of glycerol to yield sn-glycerol 3-phosphate. The protein is Glycerol kinase of Burkholderia ambifaria (strain ATCC BAA-244 / DSM 16087 / CCUG 44356 / LMG 19182 / AMMD) (Burkholderia cepacia (strain AMMD)).